The sequence spans 208 residues: AN1-type zinc finger protein 6 (208 aa).

The A20-type zinc finger occupies 8 to 42; that stretch reads SQVPMLCSTGCGFYGNPRTNGMCSVCYKEHLQRQN. The Zn(2+) site is built by C14, C18, C30, and C33. A compositionally biased stretch (polar residues) spans 41-68; it reads QNSSNGRISPPATSVSSLSESLPVQCTD. The tract at residues 41–140 is disordered; the sequence is QNSSNGRISP…PSEEQSKSLE (100 aa). The residue at position 49 (S49) is a Phosphoserine. Residues 75–94 show a composition bias toward low complexity; sequence QSTLDSTSSSMQPSPVSNQS. 2 stretches are compositionally biased toward polar residues: residues 95–110 and 120–133; these read LLSESVASSQLDSTSV and LQASVSDTAQQPSE. The AN1-type zinc-finger motif lies at 143 to 189; the sequence is KQKKNRCFMCRKKVGLTGFECRCGNVYCGVHRYSDVHNCSYNYKADA. C149, C152, C163, C165, C170, H173, H179, and C181 together coordinate Zn(2+). Position 204 is an N6-acetyllysine (K204).

As to quaternary structure, interacts with PKN1. Interacts with TRAF2. Interacts with mono- and polyubiquitin. Interacts with PEX6. Interacts with PEX5 (Cys-linked ubiquitinated).

The protein localises to the cytoplasm. Involved in regulation of TNF-alpha induced NF-kappa-B activation and apoptosis. Involved in modulation of 'Lys-48'-linked polyubiquitination status of TRAF2 and decreases association of TRAF2 with RIPK1. Required for PTS1 target sequence-dependent protein import into peroxisomes and PEX5 stability; may cooperate with PEX6. In vitro involved in PEX5 export from the cytosol to peroxisomes. This chain is AN1-type zinc finger protein 6 (ZFAND6), found in Pongo abelii (Sumatran orangutan).